The sequence spans 299 residues: tRNA dimethylallyltransferase (299 aa).

Residue Gly13–Thr20 coordinates ATP. Thr15 to Thr20 lines the substrate pocket. The interaction with substrate tRNA stretch occupies residues Asp38–Gln41.

The protein belongs to the IPP transferase family. As to quaternary structure, monomer. Mg(2+) is required as a cofactor.

The catalysed reaction is adenosine(37) in tRNA + dimethylallyl diphosphate = N(6)-dimethylallyladenosine(37) in tRNA + diphosphate. Its function is as follows. Catalyzes the transfer of a dimethylallyl group onto the adenine at position 37 in tRNAs that read codons beginning with uridine, leading to the formation of N6-(dimethylallyl)adenosine (i(6)A). The protein is tRNA dimethylallyltransferase of Prochlorococcus marinus (strain MIT 9211).